The sequence spans 158 residues: Lipoprotein signal peptidase (158 aa).

Transmembrane regions (helical) follow at residues 7-27 (LFWI…YWVV), 38-58 (LLTG…FSLL), 68-88 (LSLG…TLNL), and 92-112 (LGYG…FVLG). Residues Asp-116 and Asp-132 contribute to the active site. A helical transmembrane segment spans residues 125 to 145 (FPVFNVADSFISIGIVFLLIA).

The protein belongs to the peptidase A8 family.

The protein resides in the cell inner membrane. It catalyses the reaction Release of signal peptides from bacterial membrane prolipoproteins. Hydrolyzes -Xaa-Yaa-Zaa-|-(S,diacylglyceryl)Cys-, in which Xaa is hydrophobic (preferably Leu), and Yaa (Ala or Ser) and Zaa (Gly or Ala) have small, neutral side chains.. Its pathway is protein modification; lipoprotein biosynthesis (signal peptide cleavage). Its function is as follows. This protein specifically catalyzes the removal of signal peptides from prolipoproteins. The sequence is that of Lipoprotein signal peptidase from Nostoc punctiforme (strain ATCC 29133 / PCC 73102).